Consider the following 108-residue polypeptide: Large ribosomal subunit protein uL24 (108 aa).

It belongs to the universal ribosomal protein uL24 family. As to quaternary structure, part of the 50S ribosomal subunit.

Functionally, one of two assembly initiator proteins, it binds directly to the 5'-end of the 23S rRNA, where it nucleates assembly of the 50S subunit. Its function is as follows. One of the proteins that surrounds the polypeptide exit tunnel on the outside of the subunit. The protein is Large ribosomal subunit protein uL24 of Moorella thermoacetica (strain ATCC 39073 / JCM 9320).